The chain runs to 264 residues: Phosphatidylglycerol--prolipoprotein diacylglyceryl transferase (264 aa).

The next 3 membrane-spanning stretches (helical) occupy residues Leu-17–Ala-37, Leu-59–Tyr-79, and Trp-95–Phe-115. Arg-142 is an a 1,2-diacyl-sn-glycero-3-phospho-(1'-sn-glycerol) binding site. Transmembrane regions (helical) follow at residues Gly-205–Phe-225 and Met-241–Gly-261.

It belongs to the Lgt family.

The protein localises to the cell inner membrane. The catalysed reaction is L-cysteinyl-[prolipoprotein] + a 1,2-diacyl-sn-glycero-3-phospho-(1'-sn-glycerol) = an S-1,2-diacyl-sn-glyceryl-L-cysteinyl-[prolipoprotein] + sn-glycerol 1-phosphate + H(+). The protein operates within protein modification; lipoprotein biosynthesis (diacylglyceryl transfer). Its function is as follows. Catalyzes the transfer of the diacylglyceryl group from phosphatidylglycerol to the sulfhydryl group of the N-terminal cysteine of a prolipoprotein, the first step in the formation of mature lipoproteins. The protein is Phosphatidylglycerol--prolipoprotein diacylglyceryl transferase of Methylibium petroleiphilum (strain ATCC BAA-1232 / LMG 22953 / PM1).